Consider the following 121-residue polypeptide: Neuromedin-B (121 aa).

Positions 1-24 (MTLRARGARLLGGLLFFTLLAAGA) are cleaved as a signal peptide. Met56 is modified (methionine amide). Residues 60 to 121 (SLEPPNPSLL…RRLLVQTLEK (62 aa)) constitute a propeptide that is removed on maturation.

This sequence belongs to the bombesin/neuromedin-B/ranatensin family. As to expression, higher expression in the central nervous system (CNS) than in peripheral tissues. Highest levels are found in the olfactory bulb. Relatively high levels in the CNS (including the cerebral cortex, cerebellum, spinal cord, medulla oblongata, midbrain, hypothalamus, hippocampus, and hypophysis) and in peripheral tissues such as the pancreas, adrenal gland, testis, ovary and cecum. Moderate levels are found in the rectum, heart and pons with low expression levels detected in the bone marrow and duodenum. Other tissues show no or low levels of expression.

The protein resides in the secreted. It is found in the cell projection. The protein localises to the neuron projection. Functionally, stimulates smooth muscle contraction. Induces sighing by acting directly on the pre-Botzinger complex, a cluster of several thousand neurons in the ventrolateral medulla responsible for inspiration during respiratory activity. Contributes to the induction of sneezing following exposure to chemical irritants or allergens which causes release of NMB by nasal sensory neurons and activation of NMBR-expressing neurons in the sneeze-evoking region of the brainstem. These in turn activate neurons of the caudal ventral respiratory group, giving rise to the sneezing response. Contributes to induction of acute itch, possibly through activation of the NMBR receptor on dorsal root ganglion neurons. Increases expression of NMBR and steroidogenic mediators STAR, CYP11A1 and HSD3B1 in Leydig cells, induces secretion of testosterone by Leydig cells and also promotes Leydig cell proliferation. Plays a role in the innate immune response to influenza A virus infection by enhancing interferon alpha expression and reducing expression of IL6. Plays a role in CSF1-induced proliferation of osteoclast precursors by contributing to positive regulation of the expression of the CSF1 receptor CSF1R. This chain is Neuromedin-B (NMB), found in Sus scrofa (Pig).